The sequence spans 182 residues: Ribosome-recycling factor (182 aa).

The disordered stretch occupies residues 136-158 (IKKQEKEGDLSEDQSRDEQDQVQ).

It belongs to the RRF family.

The protein resides in the cytoplasm. Its function is as follows. Responsible for the release of ribosomes from messenger RNA at the termination of protein biosynthesis. May increase the efficiency of translation by recycling ribosomes from one round of translation to another. This Synechococcus sp. (strain CC9311) protein is Ribosome-recycling factor.